A 334-amino-acid chain; its full sequence is Holliday junction branch migration complex subunit RuvB (334 aa).

The interval 1 to 182 (MDDRMIDGEL…FGVLSRLEYY (182 aa)) is large ATPase domain (RuvB-L). ATP contacts are provided by residues L21, R22, G63, K66, T67, T68, 129–131 (EDF), R172, Y182, and R219. T67 provides a ligand contact to Mg(2+). Positions 183 to 253 (EIKDLCNIVE…STKQALEMLQ (71 aa)) are small ATPAse domain (RuvB-S). Positions 256–334 (DAGLDHVDHK…HLGIKRTGED (79 aa)) are head domain (RuvB-H). R311 and R316 together coordinate DNA.

Belongs to the RuvB family. As to quaternary structure, homohexamer. Forms an RuvA(8)-RuvB(12)-Holliday junction (HJ) complex. HJ DNA is sandwiched between 2 RuvA tetramers; dsDNA enters through RuvA and exits via RuvB. An RuvB hexamer assembles on each DNA strand where it exits the tetramer. Each RuvB hexamer is contacted by two RuvA subunits (via domain III) on 2 adjacent RuvB subunits; this complex drives branch migration. In the full resolvosome a probable DNA-RuvA(4)-RuvB(12)-RuvC(2) complex forms which resolves the HJ.

It localises to the cytoplasm. It catalyses the reaction ATP + H2O = ADP + phosphate + H(+). In terms of biological role, the RuvA-RuvB-RuvC complex processes Holliday junction (HJ) DNA during genetic recombination and DNA repair, while the RuvA-RuvB complex plays an important role in the rescue of blocked DNA replication forks via replication fork reversal (RFR). RuvA specifically binds to HJ cruciform DNA, conferring on it an open structure. The RuvB hexamer acts as an ATP-dependent pump, pulling dsDNA into and through the RuvAB complex. RuvB forms 2 homohexamers on either side of HJ DNA bound by 1 or 2 RuvA tetramers; 4 subunits per hexamer contact DNA at a time. Coordinated motions by a converter formed by DNA-disengaged RuvB subunits stimulates ATP hydrolysis and nucleotide exchange. Immobilization of the converter enables RuvB to convert the ATP-contained energy into a lever motion, pulling 2 nucleotides of DNA out of the RuvA tetramer per ATP hydrolyzed, thus driving DNA branch migration. The RuvB motors rotate together with the DNA substrate, which together with the progressing nucleotide cycle form the mechanistic basis for DNA recombination by continuous HJ branch migration. Branch migration allows RuvC to scan DNA until it finds its consensus sequence, where it cleaves and resolves cruciform DNA. The chain is Holliday junction branch migration complex subunit RuvB from Oceanobacillus iheyensis (strain DSM 14371 / CIP 107618 / JCM 11309 / KCTC 3954 / HTE831).